The sequence spans 178 residues: Cytochrome b6-f complex iron-sulfur subunit (178 aa).

Residues 20–42 (LLTFGTVTGVALGALYPVAQYFT) form a helical membrane-spanning segment. A Rieske domain is found at 71-161 (THPVGDRSLV…VSIEDDQVLV (91 aa)). 4 residues coordinate [2Fe-2S] cluster: Cys107, His109, Cys125, and His128. Cysteines 112 and 127 form a disulfide.

The protein belongs to the Rieske iron-sulfur protein family. In terms of assembly, the 4 large subunits of the cytochrome b6-f complex are cytochrome b6, subunit IV (17 kDa polypeptide, PetD), cytochrome f and the Rieske protein, while the 4 small subunits are PetG, PetL, PetM and PetN. The complex functions as a dimer. Requires [2Fe-2S] cluster as cofactor.

Its subcellular location is the cellular thylakoid membrane. The catalysed reaction is 2 oxidized [plastocyanin] + a plastoquinol + 2 H(+)(in) = 2 reduced [plastocyanin] + a plastoquinone + 4 H(+)(out). Its function is as follows. Component of the cytochrome b6-f complex, which mediates electron transfer between photosystem II (PSII) and photosystem I (PSI), cyclic electron flow around PSI, and state transitions. The polypeptide is Cytochrome b6-f complex iron-sulfur subunit (Prochlorococcus marinus (strain NATL1A)).